We begin with the raw amino-acid sequence, 256 residues long: DNA repair protein RecO (256 aa).

Belongs to the RecO family.

In terms of biological role, involved in DNA repair and RecF pathway recombination. The sequence is that of DNA repair protein RecO from Shouchella clausii (strain KSM-K16) (Alkalihalobacillus clausii).